Reading from the N-terminus, the 257-residue chain is Deoxyribose-phosphate aldolase (257 aa).

Asp-102 (proton donor/acceptor) is an active-site residue. Catalysis depends on Lys-166, which acts as the Schiff-base intermediate with acetaldehyde. Lys-198 (proton donor/acceptor) is an active-site residue.

The protein belongs to the DeoC/FbaB aldolase family. DeoC type 2 subfamily.

The protein resides in the cytoplasm. The catalysed reaction is 2-deoxy-D-ribose 5-phosphate = D-glyceraldehyde 3-phosphate + acetaldehyde. It functions in the pathway carbohydrate degradation; 2-deoxy-D-ribose 1-phosphate degradation; D-glyceraldehyde 3-phosphate and acetaldehyde from 2-deoxy-alpha-D-ribose 1-phosphate: step 2/2. In terms of biological role, catalyzes a reversible aldol reaction between acetaldehyde and D-glyceraldehyde 3-phosphate to generate 2-deoxy-D-ribose 5-phosphate. This Shewanella halifaxensis (strain HAW-EB4) protein is Deoxyribose-phosphate aldolase.